The sequence spans 1951 residues: Sodium channel protein type 3 subunit alpha (1951 aa).

At methionine 1–serine 128 the chain is on the cytoplasmic side. The interval arginine 28–asparagine 60 is disordered. Residues glutamate 46–alanine 57 are compositionally biased toward basic and acidic residues. One copy of the I repeat lies at isoleucine 110 to glutamine 455. Residues leucine 129–threonine 146 form a helical membrane-spanning segment. The Extracellular portion of the chain corresponds to leucine 147 to aspartate 152. The helical transmembrane segment at tryptophan 153 to leucine 174 threads the bilayer. Residues alanine 175–aspartate 188 are Cytoplasmic-facing. Residues proline 189–phenylalanine 206 traverse the membrane as a helical segment. Topologically, residues valine 207 to serine 213 are extracellular. The N-linked (GlcNAc...) asparagine glycan is linked to asparagine 211. A helical transmembrane segment spans residues alanine 214 to threonine 235. The Cytoplasmic portion of the chain corresponds to isoleucine 236–aspartate 249. The helical transmembrane segment at valine 250–phenylalanine 269 threads the bilayer. Over methionine 270–phenylalanine 369 the chain is Extracellular. 5 N-linked (GlcNAc...) asparagine glycosylation sites follow: asparagine 290, asparagine 296, asparagine 302, asparagine 307, and asparagine 339. The pore-forming intramembrane region spans serine 370–glutamate 386. Residues asparagine 387–glycine 397 are Extracellular-facing. Residues lysine 398–alanine 424 traverse the membrane as a helical segment. Residues methionine 425–phenylalanine 712 lie on the Cytoplasmic side of the membrane. 3 positions are modified to phosphoserine: serine 484, serine 485, and serine 486. 2 disordered regions span residues serine 493–glutamate 529 and valine 587–arginine 633. Residues arginine 500–arginine 509 are compositionally biased toward basic residues. Composition is skewed to basic and acidic residues over residues glutamate 510 to glutamate 529 and aspartate 596 to asparagine 622. The stretch at cysteine 693–glycine 965 is one II repeat. A helical transmembrane segment spans residues valine 713–methionine 730. Residues glutamate 731–glutamine 738 are Extracellular-facing. Residues phenylalanine 739 to isoleucine 763 form a helical membrane-spanning segment. Residues alanine 764–glutamate 773 are Cytoplasmic-facing. The helical transmembrane segment at glycine 774 to alanine 793 threads the bilayer. At asparagine 794–glycine 797 the chain is on the extracellular side. The helical transmembrane segment at leucine 798–tryptophan 816 threads the bilayer. Over proline 817–glycine 834 the chain is Cytoplasmic. A helical transmembrane segment spans residues asparagine 835–phenylalanine 855. Residues glycine 856–phenylalanine 880 lie on the Extracellular side of the membrane. Cysteines 864 and 870 form a disulfide. Positions phenylalanine 881–isoleucine 896 form an intramembrane region, pore-forming. Residues glutamate 897 to glycine 907 lie on the Extracellular side of the membrane. The cysteines at positions 902 and 911 are disulfide-linked. The chain crosses the membrane as a helical span at residues glutamine 908–leucine 934. Residues leucine 935–histidine 1156 are Cytoplasmic-facing. The disordered stretch occupies residues threonine 1068–glutamate 1112. An III repeat occupies lysine 1139–leucine 1450. A helical transmembrane segment spans residues asparagine 1157 to glutamate 1177. At aspartate 1178 to threonine 1189 the chain is on the extracellular side. The helical transmembrane segment at methionine 1190–valine 1211 threads the bilayer. Residues alanine 1212–threonine 1217 are Cytoplasmic-facing. The chain crosses the membrane as a helical span at residues tyrosine 1218–leucine 1243. The Extracellular segment spans residues glycine 1244–lysine 1252. The chain crosses the membrane as a helical span at residues serine 1253–glycine 1271. Residues methionine 1272–proline 1284 are Cytoplasmic-facing. A helical transmembrane segment spans residues serine 1285 to leucine 1307. The Extracellular portion of the chain corresponds to phenylalanine 1308 to asparagine 1353. Cysteines 1315 and 1335 form a disulfide. 2 N-linked (GlcNAc...) asparagine glycosylation sites follow: asparagine 1317 and asparagine 1331. Positions valine 1354 to tryptophan 1370 form an intramembrane region, pore-forming. Topologically, residues methionine 1371 to leucine 1393 are extracellular. A helical transmembrane segment spans residues tyrosine 1394 to isoleucine 1419. Residues aspartate 1420–glutamine 1477 lie on the Cytoplasmic side of the membrane. Serine 1452 is subject to Phosphoserine; by PKC. The stretch at isoleucine 1459–glutamine 1757 is one IV repeat. The helical transmembrane segment at valine 1478 to valine 1496 threads the bilayer. Topologically, residues glutamate 1497–tyrosine 1504 are extracellular. The chain crosses the membrane as a helical span at residues methionine 1505–leucine 1528. Topologically, residues isoleucine 1529–isoleucine 1538 are cytoplasmic. A helical membrane pass occupies residues glycine 1539–phenylalanine 1556. At leucine 1557–proline 1568 the chain is on the extracellular side. Residues threonine 1569–glycine 1591 form a helical membrane-spanning segment. At isoleucine 1592–proline 1604 the chain is on the cytoplasmic side. The chain crosses the membrane as a helical span at residues alanine 1605–phenylalanine 1628. At alanine 1629–methionine 1650 the chain is on the extracellular side. The pore-forming intramembrane region spans isoleucine 1651–aspartate 1663. Topologically, residues glycine 1664 to proline 1695 are extracellular. A helical membrane pass occupies residues serine 1696–isoleucine 1721. Residues leucine 1722–lysine 1951 are Cytoplasmic-facing. The 30-residue stretch at glutamate 1851–lysine 1880 folds into the IQ domain. The disordered stretch occupies residues aspartate 1898–lysine 1951. Residues threonine 1925–lysine 1951 show a composition bias toward basic and acidic residues.

It belongs to the sodium channel (TC 1.A.1.10) family. Nav1.3/SCN3A subfamily. Heterooligomer of an alpha subunit, SCN3A, and 1 to 3 regulatory beta subunits including SCN1B and SCN2B; disulfide-linked with some beta subunits like SCN2B. Interacts with NEDD4L; could regulate expression of SCN3A at the plasma membrane through ubiquitination-regulated endocytosis. Interacts with the conotoxin GVIIJ. Interacts with the spider beta/delta-theraphotoxin-Pre1a. Interacts with the spider RTX-VII toxin (AC P0DL75). May be ubiquitinated by NEDD4L; which would promote its endocytosis. Post-translationally, phosphorylation at Ser-1452 by PKC in a highly conserved cytoplasmic loop slows inactivation of the sodium channel and reduces peak sodium currents.

The protein localises to the cell membrane. Its subcellular location is the basal cell membrane. The enzyme catalyses Na(+)(in) = Na(+)(out). Its function is as follows. Pore-forming subunit of Nav1.3, a voltage-gated sodium (Nav) channel that directly mediates the depolarizing phase of action potentials in excitable membranes. Navs, also called VGSCs (voltage-gated sodium channels) or VDSCs (voltage-dependent sodium channels), operate by switching between closed and open conformations depending on the voltage difference across the membrane. In the open conformation they allow Na(+) ions to selectively pass through the pore, along their electrochemical gradient. The influx of Na+ ions provokes membrane depolarization, initiating the propagation of electrical signals throughout cells and tissues. In some secretory cell types, it also participates in cell excitability through membrane depolarization and regulates cells responsiveness to stimuli triggering secretion. For instance, it controls the release of serotonin/5-hydroxytryptamine by enterochromaffin cells and is required for both glucagon- and glucose-induced insulin secretion in pancreatic endocrine cells. This is Sodium channel protein type 3 subunit alpha from Rattus norvegicus (Rat).